Consider the following 150-residue polypeptide: Large ribosomal subunit protein bL9 (150 aa).

The protein belongs to the bacterial ribosomal protein bL9 family.

Binds to the 23S rRNA. The protein is Large ribosomal subunit protein bL9 of Polaromonas naphthalenivorans (strain CJ2).